Consider the following 212-residue polypeptide: Large ribosomal subunit protein uL3 (212 aa).

The span at 128 to 146 (RHGASRGPMKHGSKYHRRT) shows a compositional bias: basic residues. The tract at residues 128 to 164 (RHGASRGPMKHGSKYHRRTGSLGAKGPARVFKGRNLP) is disordered.

Belongs to the universal ribosomal protein uL3 family. In terms of assembly, part of the 50S ribosomal subunit. Forms a cluster with proteins L14 and L19.

Functionally, one of the primary rRNA binding proteins, it binds directly near the 3'-end of the 23S rRNA, where it nucleates assembly of the 50S subunit. In Desulfitobacterium hafniense (strain Y51), this protein is Large ribosomal subunit protein uL3.